The following is a 65-amino-acid chain: Large ribosomal subunit protein bL35 (65 aa).

Residues 1–15 (MPKLKTRKAAAKRFR) are compositionally biased toward basic residues. The disordered stretch occupies residues 1–28 (MPKLKTRKAAAKRFRQTGTGKFTRRKAN).

The protein belongs to the bacterial ribosomal protein bL35 family.

The protein is Large ribosomal subunit protein bL35 of Cyanothece sp. (strain PCC 7425 / ATCC 29141).